Consider the following 571-residue polypeptide: Wee1-like protein kinase 1-A (571 aa).

The disordered stretch occupies residues 1–101 (MSLQPVPHRL…PDCPGTPPHK (101 aa)). A compositionally biased stretch (pro residues) spans 81–98 (PASPPGPAASPPDCPGTP). The region spanning 224–494 (FHELEKIGSG…SMALVKHSVL (271 aa)) is the Protein kinase domain. Residues 230 to 238 (IGSGEFGSV) and K253 each bind ATP. D351 acts as the Proton acceptor in catalysis. Mg(2+) contacts are provided by N356 and D388. Positions 500–539 (KNAEQLRIELNAEKFKNALLQKELKKAQIAKAAAEERALF) form a coiled coil.

Belongs to the protein kinase superfamily. Ser/Thr protein kinase family. WEE1 subfamily. In terms of tissue distribution, zygotically expressed. Expressed in regions of the embryo that are devoid of mitotic cells, such as the involuting mesoderm.

It localises to the nucleus. It carries out the reaction L-tyrosyl-[protein] + ATP = O-phospho-L-tyrosyl-[protein] + ADP + H(+). Functionally, acts as a zygotic negative regulator of entry into mitosis (G2 to M transition) by protecting the nucleus from cytoplasmically activated cyclin B1-complexed cdk1 before the onset of mitosis by mediating phosphorylation of cdk1 on 'Tyr-15'. Specifically phosphorylates and inactivates cyclin B1-complexed cdk1 reaching a maximum during G2 phase and a minimum as cells enter M phase. Phosphorylation of cyclin B1-cdk1 occurs exclusively on 'Tyr-15' and phosphorylation of monomeric cdk1 does not occur. Involved in convergent extension of the paraxial mesoderm during neurulation by inhibiting the cell cycle. The sequence is that of Wee1-like protein kinase 1-A (wee1-a) from Xenopus laevis (African clawed frog).